A 511-amino-acid polypeptide reads, in one-letter code: Thioredoxin reductase 2, mitochondrial (511 aa).

The transit peptide at 1 to 21 directs the protein to the mitochondrion; the sequence is MAALRGAAARFRGRAPGGARG. 29–58 lines the FAD pocket; that stretch reads DLLVIGGGSGGLACAKEAAQLGKKVAVLDY. An intrachain disulfide couples Cys-74 to Cys-79. Lys-316 is subject to N6-succinyllysine. The active-site Proton acceptor is His-484. The cysteinyl-selenocysteine (Cys-Sec) cross-link spans 509 to 510; sequence CU. Sec-510 is a non-standard amino acid (selenocysteine).

Belongs to the class-I pyridine nucleotide-disulfide oxidoreductase family. In terms of assembly, homodimer. It depends on FAD as a cofactor.

Its subcellular location is the mitochondrion. The catalysed reaction is [thioredoxin]-dithiol + NADP(+) = [thioredoxin]-disulfide + NADPH + H(+). With respect to regulation, inhibited by 1-chloro-2,4-dinitrobenzene and by zinc, calcium, magnesium and Fe(2+) ions. Involved in the control of reactive oxygen species levels and the regulation of mitochondrial redox homeostasis. Maintains thioredoxin in a reduced state. May play a role in redox-regulated cell signaling. The sequence is that of Thioredoxin reductase 2, mitochondrial (TXNRD2) from Bos taurus (Bovine).